The sequence spans 316 residues: Malate dehydrogenase (316 aa).

NAD(+) is bound by residues 12-17 and Asp36; that span reads GAGNIG. Positions 85 and 91 each coordinate substrate. NAD(+) is bound by residues Asn98 and 121–123; that span reads VTN. Substrate-binding residues include Asn123 and Arg154. His178 functions as the Proton acceptor in the catalytic mechanism.

Belongs to the LDH/MDH superfamily. MDH type 3 family.

The catalysed reaction is (S)-malate + NAD(+) = oxaloacetate + NADH + H(+). Its function is as follows. Catalyzes the reversible oxidation of malate to oxaloacetate. This Wolbachia sp. subsp. Brugia malayi (strain TRS) protein is Malate dehydrogenase.